The following is a 576-amino-acid chain: Enolase 4 (576 aa).

Positions 187–232 (ELRNEAMSEAPPQATPTSAPAKDKKGNDKGKKGNITENPLPPAEPP) are disordered. The segment covering 196-206 (APPQATPTSAP) has biased composition (low complexity). Basic and acidic residues predominate over residues 207 to 217 (AKDKKGNDKGK). Substrate contacts are provided by Glu302 and Lys524.

It belongs to the enolase family.

The enzyme catalyses (2R)-2-phosphoglycerate = phosphoenolpyruvate + H2O. Its pathway is carbohydrate degradation; glycolysis; pyruvate from D-glyceraldehyde 3-phosphate: step 4/5. The chain is Enolase 4 (eno4) from Danio rerio (Zebrafish).